We begin with the raw amino-acid sequence, 334 residues long: Meso-diaminopimelate D-dehydrogenase (334 aa).

NADP(+) contacts are provided by residues 16–19 (YGNL), 40–42 (TRR), 75–78 (CSGS), 98–100 (GFD), and 127–131 (CGWDP). Substrate contacts are provided by residues Asp100, Asp130, Trp154, 160 to 161 (QG), Thr179, Arg205, His255, and Asn284.

The protein belongs to the diaminopimelate dehydrogenase family. Homodimer.

It catalyses the reaction meso-2,6-diaminopimelate + NADP(+) + H2O = (S)-2-amino-6-oxoheptanedioate + NH4(+) + NADPH + H(+). It participates in amino-acid biosynthesis; L-lysine biosynthesis via DAP pathway; DL-2,6-diaminopimelate from (S)-tetrahydrodipicolinate: step 1/1. Catalyzes the reversible NADPH-dependent reductive amination of L-2-amino-6-oxopimelate, the acyclic form of L-tetrahydrodipicolinate, to generate the meso compound, D,L-2,6-diaminopimelate. Probably plays a role in lysine biosynthesis. Exhibits a high substrate specificity for meso-2,6-diaminopimelate (m-DAP), since the activity with L,L-2,6-diaminopimelate is less than 5% of the activity observed with m-DAP. Can use NAD(+) only very poorly since the activity observed in the presence of NAD(+) is about 0.3% of that with NADP(+). The protein is Meso-diaminopimelate D-dehydrogenase (ddh) of Acetivibrio thermocellus (strain ATCC 27405 / DSM 1237 / JCM 9322 / NBRC 103400 / NCIMB 10682 / NRRL B-4536 / VPI 7372) (Clostridium thermocellum).